The chain runs to 502 residues: D-erythritol 1-phosphate dehydrogenase (502 aa).

8-36 (DLFVIGGGINGAGVARDAAGRGLKVVLAE) lines the FAD pocket.

The protein belongs to the FAD-dependent glycerol-3-phosphate dehydrogenase family. FAD is required as a cofactor.

It carries out the reaction D-erythritol 1-phosphate + NADP(+) = D-erythrulose 1-phosphate + NADPH + H(+). It participates in carbohydrate metabolism; erythritol degradation. In terms of biological role, catalyzes the oxydation of D-erythritol 1-phosphate to D-erythrulose 1-phosphate. The polypeptide is D-erythritol 1-phosphate dehydrogenase (Brucella abortus (strain 2308)).